A 416-amino-acid chain; its full sequence is Adenylosuccinate synthetase (416 aa).

Residues 12-18 and 40-42 each bind GTP; these read GDEGKGK and GHT. Residue Asp13 is the Proton acceptor of the active site. Asp13 and Gly40 together coordinate Mg(2+). IMP contacts are provided by residues 13-16, 38-41, Thr125, Arg139, Gln219, Thr234, and Arg298; these read DEGK and NAGH. The active-site Proton donor is the His41. Position 294–300 (294–300) interacts with substrate; the sequence is TVTGRKR. GTP contacts are provided by residues Arg300, 326–328, and 404–406; these read KLD and STS.

The protein belongs to the adenylosuccinate synthetase family. Homodimer. Mg(2+) is required as a cofactor.

Its subcellular location is the cytoplasm. The enzyme catalyses IMP + L-aspartate + GTP = N(6)-(1,2-dicarboxyethyl)-AMP + GDP + phosphate + 2 H(+). The protein operates within purine metabolism; AMP biosynthesis via de novo pathway; AMP from IMP: step 1/2. Plays an important role in the de novo pathway of purine nucleotide biosynthesis. Catalyzes the first committed step in the biosynthesis of AMP from IMP. This Aliarcobacter butzleri (strain RM4018) (Arcobacter butzleri) protein is Adenylosuccinate synthetase.